Consider the following 151-residue polypeptide: Nucleoside diphosphate kinase (151 aa).

6 residues coordinate ATP: Lys11, Phe59, Arg87, Thr93, Arg104, and Asn114. Catalysis depends on His117, which acts as the Pros-phosphohistidine intermediate.

It belongs to the NDK family. Homotetramer. It depends on Mg(2+) as a cofactor.

It localises to the cytoplasm. It catalyses the reaction a 2'-deoxyribonucleoside 5'-diphosphate + ATP = a 2'-deoxyribonucleoside 5'-triphosphate + ADP. The enzyme catalyses a ribonucleoside 5'-diphosphate + ATP = a ribonucleoside 5'-triphosphate + ADP. Its function is as follows. Major role in the synthesis of nucleoside triphosphates other than ATP. The ATP gamma phosphate is transferred to the NDP beta phosphate via a ping-pong mechanism, using a phosphorylated active-site intermediate. The sequence is that of Nucleoside diphosphate kinase from Prochlorococcus marinus (strain NATL2A).